The chain runs to 490 residues: MIEETQTPSPPAPAPAPAEYPIDLLTVESLDIEAQGIAHRADGKVVFIEGALPFEQVTANVYRKKSSFEKATLTAIYRESSQRVTPACPHFGMHTGACGGCKMQHLHIGAQVAVKQRVLEDNLRFIGKVKADNLLRPIEGPAWHYRYRARLSVRYVRKKGTALVGFHERKSAYVADMTECHVVPQHVSDMLVPLRGLISSMDARETIPQIELACGDDLTAMVLRHMEPLSVADLARLRAFAAANAGLQWWVQSGGLDTVKLLDAQVAELSYGLPEFGITMPFKPTDFTQVNPHINQVLVSRALRLLGVQPTERVIDWFCGLGNFTLPLATRAREVLGIEGSEVLVARSRENYERNKASSHVRPALEATKFVARNLFEMTPAMLVKDGAAEKWLVDPPREGAFELFKSLAALHQQVVTGVPCDDGIHQQSLALGGWTPPSRIVYVSCNPATLARDAGVLVEGGGYRCTAAGVVNMFPHTAHVESMAVFERL.

The 62-residue stretch at 14–75 (APAPAEYPID…SSFEKATLTA (62 aa)) folds into the TRAM domain. Cys-88, Cys-98, Cys-101, and Cys-180 together coordinate [4Fe-4S] cluster. S-adenosyl-L-methionine is bound by residues Gln-289, Phe-318, Asn-323, Glu-339, Asn-374, and Asp-395. The active-site Nucleophile is the Cys-446.

Belongs to the class I-like SAM-binding methyltransferase superfamily. RNA M5U methyltransferase family. RlmD subfamily.

The catalysed reaction is uridine(1939) in 23S rRNA + S-adenosyl-L-methionine = 5-methyluridine(1939) in 23S rRNA + S-adenosyl-L-homocysteine + H(+). Its function is as follows. Catalyzes the formation of 5-methyl-uridine at position 1939 (m5U1939) in 23S rRNA. This Polaromonas naphthalenivorans (strain CJ2) protein is 23S rRNA (uracil(1939)-C(5))-methyltransferase RlmD.